Here is a 125-residue protein sequence, read N- to C-terminus: Phosphoribosyl-AMP cyclohydrolase (125 aa).

Mg(2+) is bound at residue Asp74. A Zn(2+)-binding site is contributed by Cys75. Residues Asp76 and Asp78 each contribute to the Mg(2+) site. Zn(2+) is bound by residues Cys92 and Cys99.

Belongs to the PRA-CH family. As to quaternary structure, homodimer. Mg(2+) is required as a cofactor. It depends on Zn(2+) as a cofactor.

It localises to the cytoplasm. The enzyme catalyses 1-(5-phospho-beta-D-ribosyl)-5'-AMP + H2O = 1-(5-phospho-beta-D-ribosyl)-5-[(5-phospho-beta-D-ribosylamino)methylideneamino]imidazole-4-carboxamide. The protein operates within amino-acid biosynthesis; L-histidine biosynthesis; L-histidine from 5-phospho-alpha-D-ribose 1-diphosphate: step 3/9. In terms of biological role, catalyzes the hydrolysis of the adenine ring of phosphoribosyl-AMP. This Syntrophotalea carbinolica (strain DSM 2380 / NBRC 103641 / GraBd1) (Pelobacter carbinolicus) protein is Phosphoribosyl-AMP cyclohydrolase.